The sequence spans 327 residues: MAVADNPFSMSTMFNALPNPKGISGSIPPPGFAPRASATPLHAALFNLMTDGDGVSYFKEMISNSDKTELQRMASLLTSDSDYFMSIVTTKFGSRRVQKLLGKSDDVDAFFCAAILRRFLHITTDKYASYVTIRAMVVFDKVMKKALYERILYHALDLACDQHGCIALNDIITDADDPYYRDQLLELVASNALRLSNDASGNFVVQHVLTLYDSRCIHNIAVNLYGQCIELSFKKYGSYIVEKLLEVEESMVVVVVELLGCDGDRLMRLARNEFGNFVVVKALRFTKMSRMDLFWGLVQKLMPFIRLLRRSHGSNIANILDSFRLRC.

A PUM-HD domain is found at Met1 to Arg324. Pumilio repeat units lie at residues Ser79–Ala114, Ile115–Glu149, Arg150–Leu185, Glu186–Val222, Asn223–Gly260, and Cys261–Trp295.

The protein localises to the cytoplasm. Sequence-specific RNA-binding protein that regulates translation and mRNA stability by binding the 3'-UTR of target mRNAs. The protein is Pumilio homolog 18 (APUM18) of Arabidopsis thaliana (Mouse-ear cress).